A 337-amino-acid chain; its full sequence is PHD finger protein 11 (337 aa).

The segment at lysine 42–leucine 78 adopts a C2HC pre-PHD-type zinc-finger fold. Residues leucine 108–alanine 160 form a PHD-type zinc finger.

In terms of assembly, interacts with BRCA1 and RELA.

The protein resides in the nucleus. In terms of biological role, positive regulator of Th1-type cytokine gene expression. The sequence is that of PHD finger protein 11 (PHF11) from Bos taurus (Bovine).